We begin with the raw amino-acid sequence, 37 residues long: Large ribosomal subunit protein bL36B (37 aa).

The protein belongs to the bacterial ribosomal protein bL36 family.

The protein is Large ribosomal subunit protein bL36B of Saccharopolyspora erythraea (strain ATCC 11635 / DSM 40517 / JCM 4748 / NBRC 13426 / NCIMB 8594 / NRRL 2338).